Reading from the N-terminus, the 632-residue chain is Sporulenol synthase (632 aa).

Asp377 functions as the Proton donor in the catalytic mechanism. PFTB repeat units lie at residues 395–436 (WERG…EDAA), 465–505 (IQRA…HACG), and 513–554 (IQKA…VQTA).

It belongs to the terpene cyclase/mutase family.

It localises to the cell membrane. It carries out the reaction sporulenol = (R)-tetraprenyl-beta-curcumene + H2O. It functions in the pathway secondary metabolite biosynthesis; hopanoid biosynthesis. Functionally, catalyzes the cyclization of tetraprenyl beta-curcumene into sporulenol. The sequence is that of Sporulenol synthase (sqhC) from Bacillus subtilis (strain 168).